Consider the following 306-residue polypeptide: Agmatinase (306 aa).

Mn(2+) is bound by residues H126, D149, H151, D153, D230, and D232.

It belongs to the arginase family. Agmatinase subfamily. Mn(2+) is required as a cofactor.

It carries out the reaction agmatine + H2O = urea + putrescine. Its pathway is amine and polyamine biosynthesis; putrescine biosynthesis via agmatine pathway; putrescine from agmatine: step 1/1. In terms of biological role, catalyzes the formation of putrescine from agmatine. This Escherichia coli O1:K1 / APEC protein is Agmatinase.